We begin with the raw amino-acid sequence, 333 residues long: L-lactate dehydrogenase B chain (333 aa).

NAD(+)-binding positions include 29 to 57 (GQVG…WEDK) and Arg-99. Substrate-binding residues include Arg-106, Asn-138, and Arg-169. Asn-138 is a binding site for NAD(+). Residue His-193 is the Proton acceptor of the active site. Thr-248 contacts substrate.

The protein belongs to the LDH/MDH superfamily. LDH family. As to quaternary structure, homotetramer.

It is found in the cytoplasm. It catalyses the reaction (S)-lactate + NAD(+) = pyruvate + NADH + H(+). It functions in the pathway fermentation; pyruvate fermentation to lactate; (S)-lactate from pyruvate: step 1/1. Its function is as follows. Interconverts simultaneously and stereospecifically pyruvate and lactate with concomitant interconversion of NADH and NAD(+). This Trachemys scripta elegans (Red-eared slider turtle) protein is L-lactate dehydrogenase B chain (LDHB).